Reading from the N-terminus, the 93-residue chain is UPF0358 protein BLi01701/BL02974 (93 aa).

The protein belongs to the UPF0358 family.

This is UPF0358 protein BLi01701/BL02974 from Bacillus licheniformis (strain ATCC 14580 / DSM 13 / JCM 2505 / CCUG 7422 / NBRC 12200 / NCIMB 9375 / NCTC 10341 / NRRL NRS-1264 / Gibson 46).